The primary structure comprises 179 residues: ATP synthase subunit delta (179 aa).

Belongs to the ATPase delta chain family. In terms of assembly, F-type ATPases have 2 components, F(1) - the catalytic core - and F(0) - the membrane proton channel. F(1) has five subunits: alpha(3), beta(3), gamma(1), delta(1), epsilon(1). F(0) has three main subunits: a(1), b(2) and c(10-14). The alpha and beta chains form an alternating ring which encloses part of the gamma chain. F(1) is attached to F(0) by a central stalk formed by the gamma and epsilon chains, while a peripheral stalk is formed by the delta and b chains.

It localises to the cell inner membrane. Its function is as follows. F(1)F(0) ATP synthase produces ATP from ADP in the presence of a proton or sodium gradient. F-type ATPases consist of two structural domains, F(1) containing the extramembraneous catalytic core and F(0) containing the membrane proton channel, linked together by a central stalk and a peripheral stalk. During catalysis, ATP synthesis in the catalytic domain of F(1) is coupled via a rotary mechanism of the central stalk subunits to proton translocation. Functionally, this protein is part of the stalk that links CF(0) to CF(1). It either transmits conformational changes from CF(0) to CF(1) or is implicated in proton conduction. This is ATP synthase subunit delta from Koribacter versatilis (strain Ellin345).